The chain runs to 150 residues: Large ribosomal subunit protein bL9 (150 aa).

It belongs to the bacterial ribosomal protein bL9 family.

Its function is as follows. Binds to the 23S rRNA. The polypeptide is Large ribosomal subunit protein bL9 (Streptococcus equi subsp. zooepidemicus (strain MGCS10565)).